Here is a 497-residue protein sequence, read N- to C-terminus: Angiopoietin-1 (497 aa).

The N-terminal stretch at 1–19 is a signal peptide; that stretch reads MTVFLSFAFFAAILTHIGC. Positions 81–119 form a coiled coil; it reads QKLQHLEHVMENYTQWLQKLENYIVENMKSEMAQIQQNA. 5 N-linked (GlcNAc...) asparagine glycosylation sites follow: Asn-92, Asn-122, Asn-154, Asn-243, and Asn-294. The stretch at 153–261 forms a coiled coil; the sequence is LNQTSRLEIQ…LELMDTVHNL (109 aa). In terms of domain architecture, Fibrinogen C-terminal spans 276–496; it reads REEEKPFRDC…STTMMIRPLD (221 aa). 2 cysteine pairs are disulfide-bonded: Cys-285–Cys-314 and Cys-438–Cys-451.

Homooligomer. Interacts with TEK/TIE2. Interacts with SVEP1/polydom. Interacts with THBD; this interaction significantly inhibits the generation of activated PC and TAFIa/CPB2 by the thrombin/thrombomodulin complex.

Its subcellular location is the secreted. Binds and activates TIE2 receptor by inducing its tyrosine phosphorylation. Implicated in endothelial developmental processes later and distinct from that of VEGF. Appears to play a crucial role in mediating reciprocal interactions between the endothelium and surrounding matrix and mesenchyme. Mediates blood vessel maturation/stability. It may play an important role in the heart early development. In Rattus norvegicus (Rat), this protein is Angiopoietin-1 (Angpt1).